We begin with the raw amino-acid sequence, 405 residues long: Deoxyguanosinetriphosphate triphosphohydrolase-like protein (405 aa).

Positions R75 to N219 constitute an HD domain.

Belongs to the dGTPase family. Type 2 subfamily.

This is Deoxyguanosinetriphosphate triphosphohydrolase-like protein from Rhizobium johnstonii (strain DSM 114642 / LMG 32736 / 3841) (Rhizobium leguminosarum bv. viciae).